A 103-amino-acid polypeptide reads, in one-letter code: Urease subunit beta (103 aa).

The protein belongs to the urease beta subunit family. As to quaternary structure, heterotrimer of UreA (gamma), UreB (beta) and UreC (alpha) subunits. Three heterotrimers associate to form the active enzyme.

The protein resides in the cytoplasm. The enzyme catalyses urea + 2 H2O + H(+) = hydrogencarbonate + 2 NH4(+). The protein operates within nitrogen metabolism; urea degradation; CO(2) and NH(3) from urea (urease route): step 1/1. The chain is Urease subunit beta from Mycobacterium marinum (strain ATCC BAA-535 / M).